We begin with the raw amino-acid sequence, 370 residues long: Caffeic acid 3-O-methyltransferase (370 aa).

Positions 1 to 2 (MG) are excised as a propeptide. 135–141 (MNQDKVL) lines the substrate pocket. The tract at residues 167–185 (AFEYHGTDPRFNKVFNRGM) is substrate binding. 5 residues coordinate S-adenosyl-L-methionine: glycine 213, aspartate 236, aspartate 256, methionine 257, and lysine 270. Histidine 274 functions as the Proton acceptor in the catalytic mechanism.

Belongs to the class I-like SAM-binding methyltransferase superfamily. Cation-independent O-methyltransferase family. COMT subfamily. In terms of assembly, homodimer.

It carries out the reaction (E)-caffeate + S-adenosyl-L-methionine = (E)-ferulate + S-adenosyl-L-homocysteine + H(+). Its pathway is aromatic compound metabolism; phenylpropanoid biosynthesis. Its function is as follows. Catalyzes the conversion of caffeic acid to ferulic acid and of 5-hydroxyferulic acid to sinapic acid. The resulting products may subsequently be converted to the corresponding alcohols that are incorporated into lignins. This chain is Caffeic acid 3-O-methyltransferase (COMT), found in Clarkia breweri (Fairy fans).